Here is a 568-residue protein sequence, read N- to C-terminus: Transport inhibitor response 1-like protein Os11g0515500 (568 aa).

The F-box domain occupies 1-45; sequence MVFFPEEVVEHILGFLASHRDRNAVSLVCREWYRVERLSRRSVLV. Residues Lys69, 103 to 104, and Arg335 each bind 1D-myo-inositol hexakisphosphate; that span reads KR. An interaction with auxin-responsive proteins region spans residues 338–343; that stretch reads PANANA. 390–392 lines the 1D-myo-inositol hexakisphosphate pocket; sequence SFR. The interval 394-398 is interaction with auxin-responsive proteins; the sequence is CVLDP. A 1D-myo-inositol hexakisphosphate-binding site is contributed by Arg425. The interval 453-454 is interaction with auxin-responsive proteins; it reads AF. 1D-myo-inositol hexakisphosphate-binding positions include 473–474 and Arg498; that span reads KK.

In terms of assembly, part of a SCF (SKP1-cullin-F-box) protein ligase complex. May interact with auxin and auxin-responsive proteins.

Its subcellular location is the nucleus. It participates in protein modification; protein ubiquitination. This chain is Transport inhibitor response 1-like protein Os11g0515500, found in Oryza sativa subsp. japonica (Rice).